Reading from the N-terminus, the 918-residue chain is Nitrate reductase [NADH] (918 aa).

Residues 25 to 44 (KNGPNHRADSPVRGCNFPNS) are disordered. C195 contacts Mo-molybdopterin. Residues 543 to 618 (SNTYTLSEVK…LEDYRIGELI (76 aa)) enclose the Cytochrome b5 heme-binding domain. Heme-binding residues include H578 and H601. Residues 661 to 774 (NEKIPCKLIS…KGPLGHIEYT (114 aa)) form the FAD-binding FR-type domain. FAD is bound by residues 714-717 (RAYT), 731-735 (VVKVY), F736, F743, 748-750 (IMS), and T801.

Belongs to the nitrate reductase family. In terms of assembly, homodimer. The cofactor is FAD. Heme is required as a cofactor. Requires Mo-molybdopterin as cofactor.

The catalysed reaction is nitrite + NAD(+) + H2O = nitrate + NADH + H(+). Nitrate reductase is a key enzyme involved in the first step of nitrate assimilation in plants, fungi and bacteria. The sequence is that of Nitrate reductase [NADH] from Cucurbita maxima (Pumpkin).